A 180-amino-acid chain; its full sequence is NAD(P)H-quinone oxidoreductase subunit I, chloroplastic (180 aa).

4Fe-4S ferredoxin-type domains lie at 55-84 (GRIH…VNWR) and 95-124 (LNYS…MTEE). [4Fe-4S] cluster is bound by residues cysteine 64, cysteine 67, cysteine 70, cysteine 74, cysteine 104, cysteine 107, cysteine 110, and cysteine 114.

The protein belongs to the complex I 23 kDa subunit family. As to quaternary structure, NDH is composed of at least 16 different subunits, 5 of which are encoded in the nucleus. The cofactor is [4Fe-4S] cluster.

It is found in the plastid. The protein resides in the chloroplast thylakoid membrane. It carries out the reaction a plastoquinone + NADH + (n+1) H(+)(in) = a plastoquinol + NAD(+) + n H(+)(out). The enzyme catalyses a plastoquinone + NADPH + (n+1) H(+)(in) = a plastoquinol + NADP(+) + n H(+)(out). Functionally, NDH shuttles electrons from NAD(P)H:plastoquinone, via FMN and iron-sulfur (Fe-S) centers, to quinones in the photosynthetic chain and possibly in a chloroplast respiratory chain. The immediate electron acceptor for the enzyme in this species is believed to be plastoquinone. Couples the redox reaction to proton translocation, and thus conserves the redox energy in a proton gradient. The chain is NAD(P)H-quinone oxidoreductase subunit I, chloroplastic from Platanus occidentalis (Sycamore).